The chain runs to 638 residues: Lactose permease (638 aa).

Residues 1–470 (MHNHKVSGKQ…AQVIEELKSK (470 aa)) are permease. 12 consecutive transmembrane segments (helical) span residues 27–47 (FYGV…FSGL), 56–76 (IGLI…IDPI), 94–114 (WILI…TGIF), 121–141 (WILF…FYSL), 166–186 (LGAF…VPLV), 204–224 (WFAF…IVCF), 261–281 (LAYL…FYMY), 291–311 (FWVV…SFPV), 320–340 (WLFI…IFGH), 343–363 (VFLM…LVTV), 395–415 (FAGA…GMTG), and 429–449 (TFNM…IVVF). One can recognise a PTS EIIA type-1 domain in the interval 503-610 (SSVVDEDGKP…KDTIVIFYTQ (108 aa)). At His558 the chain carries Phosphohistidine; by HPr.

It in the N-terminal section; belongs to the sodium:galactoside symporter (TC 2.A.2) family.

The protein localises to the cell membrane. In terms of biological role, responsible for transport of beta-galactosides into the cell, with the concomitant uptake of protons (symport system), and also for transport of homologous and heterologous exchange of beta-galactosides. This is Lactose permease (lacS) from Lactobacillus helveticus (Lactobacillus suntoryeus).